The chain runs to 592 residues: Membrane protein insertase YidC (592 aa).

Residues 7-27 (NYFVAIALSVLILVAWQYFYV) traverse the membrane as a helical segment. A disordered region spans residues 38-74 (AEKAQQTQQVQPQQGGQQPAPGQALPGGAVPGESRDQ). Residues 41-69 (AQQTQQVQPQQGGQQPAPGQALPGGAVPG) are compositionally biased toward low complexity. Helical transmembrane passes span 367–387 (LFGNFGVAILVTTIVVKLIFF), 441–461 (WPILIQIPVFFALYKVIYITI), 486–506 (LFGLLPFDGPAFLHLGIWPII), and 530–550 (FTWMPLVFTFMLASFPAGLVI).

It belongs to the OXA1/ALB3/YidC family. Type 1 subfamily. In terms of assembly, interacts with the Sec translocase complex via SecD. Specifically interacts with transmembrane segments of nascent integral membrane proteins during membrane integration.

It localises to the cell inner membrane. In terms of biological role, required for the insertion and/or proper folding and/or complex formation of integral membrane proteins into the membrane. Involved in integration of membrane proteins that insert both dependently and independently of the Sec translocase complex, as well as at least some lipoproteins. Aids folding of multispanning membrane proteins. This is Membrane protein insertase YidC from Sinorhizobium fredii (strain NBRC 101917 / NGR234).